The following is an 81-amino-acid chain: MATSKSGGSSKNGRDSISKRLGVKRSGGQFVKAEEIIVRQRGTKFHKGRNVGLGRDYTLFALSSGKVEFKTLKGKKYVNII.

Polar residues predominate over residues 1–11 (MATSKSGGSSK). The interval 1 to 23 (MATSKSGGSSKNGRDSISKRLGV) is disordered.

Belongs to the bacterial ribosomal protein bL27 family.

This Borrelia garinii subsp. bavariensis (strain ATCC BAA-2496 / DSM 23469 / PBi) (Borreliella bavariensis) protein is Large ribosomal subunit protein bL27.